Reading from the N-terminus, the 346-residue chain is Protein NDL1 (346 aa).

It belongs to the NDRG family. Interacts with GB1. Interacts with the heterodimers formed by GB1 and GG1, or GB1 and GG2. Interacts with RGS1. As to expression, expressed in root vasculature, cotyledons, leaves, petals, mature stamens and pollen grains.

The protein resides in the cytoplasm. Its function is as follows. Interacts with the heterotrimeric G protein beta subunit GB1 and plays an significant role in GB1-dependent regulation of lateral root formation. Involved in a signaling pathway that modulates root auxin transport and auxin gradients. Acts partially by positively regulating the auxin carrier PIN2 and AUX1. Acts, together with GB1 as positive regulator of meristem initiation and branching. GB1 and NDL1 positively regulate basipetal inflorescence auxin transport and modulate MAX2 expression in shoots, which regulates organ and lateral meristem formation by the establishment and maintenance of auxin gradients. In Arabidopsis thaliana (Mouse-ear cress), this protein is Protein NDL1.